We begin with the raw amino-acid sequence, 293 residues long: 4-diphosphocytidyl-2-C-methyl-D-erythritol kinase (293 aa).

Residue lysine 10 is part of the active site. 96-106 serves as a coordination point for ATP; it reads PVASGIGGGSS. Aspartate 138 is an active-site residue.

The protein belongs to the GHMP kinase family. IspE subfamily.

The catalysed reaction is 4-CDP-2-C-methyl-D-erythritol + ATP = 4-CDP-2-C-methyl-D-erythritol 2-phosphate + ADP + H(+). Its pathway is isoprenoid biosynthesis; isopentenyl diphosphate biosynthesis via DXP pathway; isopentenyl diphosphate from 1-deoxy-D-xylulose 5-phosphate: step 3/6. Catalyzes the phosphorylation of the position 2 hydroxy group of 4-diphosphocytidyl-2C-methyl-D-erythritol. The chain is 4-diphosphocytidyl-2-C-methyl-D-erythritol kinase from Chelativorans sp. (strain BNC1).